The primary structure comprises 236 residues: Purine nucleoside phosphorylase DeoD-type (236 aa).

Histidine 5 lines the a purine D-ribonucleoside pocket. Phosphate is bound by residues glycine 21, arginine 25, arginine 44, and arginine 88–threonine 91. A purine D-ribonucleoside-binding positions include glutamate 180–glutamate 182 and serine 204–aspartate 205. The active-site Proton donor is the aspartate 205.

Belongs to the PNP/UDP phosphorylase family. Homohexamer; trimer of homodimers.

The catalysed reaction is a purine D-ribonucleoside + phosphate = a purine nucleobase + alpha-D-ribose 1-phosphate. It catalyses the reaction a purine 2'-deoxy-D-ribonucleoside + phosphate = a purine nucleobase + 2-deoxy-alpha-D-ribose 1-phosphate. Its function is as follows. Catalyzes the reversible phosphorolytic breakdown of the N-glycosidic bond in the beta-(deoxy)ribonucleoside molecules, with the formation of the corresponding free purine bases and pentose-1-phosphate. The chain is Purine nucleoside phosphorylase DeoD-type from Shewanella baltica (strain OS155 / ATCC BAA-1091).